We begin with the raw amino-acid sequence, 312 residues long: Glyoxylate/hydroxypyruvate reductase A (312 aa).

Arginine 227 is a catalytic residue. Histidine 275 serves as the catalytic Proton donor.

This sequence belongs to the D-isomer specific 2-hydroxyacid dehydrogenase family. GhrA subfamily.

Its subcellular location is the cytoplasm. The enzyme catalyses glycolate + NADP(+) = glyoxylate + NADPH + H(+). It catalyses the reaction (R)-glycerate + NAD(+) = 3-hydroxypyruvate + NADH + H(+). The catalysed reaction is (R)-glycerate + NADP(+) = 3-hydroxypyruvate + NADPH + H(+). In terms of biological role, catalyzes the NADPH-dependent reduction of glyoxylate and hydroxypyruvate into glycolate and glycerate, respectively. This is Glyoxylate/hydroxypyruvate reductase A from Shigella boydii serotype 18 (strain CDC 3083-94 / BS512).